Consider the following 444-residue polypeptide: Glycerol-3-phosphate transporter (444 aa).

Over 1 to 36 (MLNIFKPAPHIERLDDSKMDAAYKRLRLQVFIGIFI) the chain is Cytoplasmic. Residues 37-57 (GYAGYYLLRKNFAFAIPYLQE) traverse the membrane as a helical segment. The Extracellular portion of the chain corresponds to 58-63 (QGFSKT). The chain crosses the membrane as a helical span at residues 64–84 (ELGLVLAAVSIAYGFSKFIMG). Topologically, residues 85 to 93 (MVSDRCNPR) are cytoplasmic. A helical membrane pass occupies residues 94–112 (YFLATGLFLSAIVNILFVS). At 113 to 120 (MPWVTSSV) the chain is on the extracellular side. A helical membrane pass occupies residues 121–141 (TIMFIFMFINGWFQGMGWPPC). Over 142–160 (GRTMAHWFSISERGTKMSI) the chain is Cytoplasmic. The helical transmembrane segment at 161-180 (WNVAHNIGGGILAPLVTLGI) threads the bilayer. The Extracellular portion of the chain corresponds to 181–189 (AMFVTWKSV). A helical membrane pass occupies residues 190–207 (FFFPAIIAIIISFLIVLL). Topologically, residues 208–261 (VRDTPQSCGLPPIEEYRNDYPKHAFKNQEKELTTKEILFQYVLNNKFLWYIAFA) are cytoplasmic. A helical membrane pass occupies residues 262 to 282 (NVFVYFVRYGVVDWAPTYLTE). The Extracellular segment spans residues 283 to 287 (AKGFS). The chain crosses the membrane as a helical span at residues 288–308 (PEDSRWSYFLYEYAGIPGTIL). Residues 309 to 321 (CGWISDRFFKSRR) are Cytoplasmic-facing. The chain crosses the membrane as a helical span at residues 322 to 341 (APAGVLFMAGVFIAVLVYWL). Over 342–346 (NPAGN) the chain is Extracellular. The helical transmembrane segment at 347-368 (PLVDNIALISIGFLIYGPVMLI) threads the bilayer. At 369-387 (GLQAIDLAPKKAAGTAAGL) the chain is on the cytoplasmic side. A helical membrane pass occupies residues 388–409 (TGFFGYIGGSAFANAIMGFVVD). At 410–414 (RFNWN) the chain is on the extracellular side. A helical transmembrane segment spans residues 415–435 (GGFIMLISSCILAIVFLALTW). Residues 436–444 (NTGKRAEHV) lie on the Cytoplasmic side of the membrane.

It belongs to the major facilitator superfamily. Organophosphate:Pi antiporter (OPA) (TC 2.A.1.4) family.

The protein localises to the cell membrane. Its function is as follows. Responsible for glycerol-3-phosphate uptake. This Bacillus subtilis (strain 168) protein is Glycerol-3-phosphate transporter (glpT).